A 43-amino-acid chain; its full sequence is Protein PsbN (43 aa).

A helical membrane pass occupies residues 7–27 (FVVGILVALVLITAFAVYTAF).

This sequence belongs to the PsbN family.

It localises to the cell inner membrane. Functionally, may play a role in photosystem I and II biogenesis. This is Protein PsbN from Gloeobacter violaceus (strain ATCC 29082 / PCC 7421).